A 534-amino-acid chain; its full sequence is Serine/threonine-protein kinase Nek6 (534 aa).

One can recognise a Protein kinase domain in the interval 4-257 (YEVVEQIGRG…AGELLRHPYL (254 aa)). Residues 10 to 18 (IGRGAYGSA) and lysine 33 each bind ATP. The active-site Proton acceptor is aspartate 129. Disordered stretches follow at residues 278-306 (KSNL…SSEA) and 425-449 (KAHT…SSPK).

This sequence belongs to the protein kinase superfamily. NEK Ser/Thr protein kinase family. NIMA subfamily. As to quaternary structure, interacts with DIS1. In terms of processing, ubiquitinated by the E3 ligase DIS1. Ubiquitination of NEK6 leads to its degradation via the 26S proteasome-dependent pathway. In terms of tissue distribution, expressed in anthers, pistils and leaves.

It localises to the cytoplasm. The enzyme catalyses L-seryl-[protein] + ATP = O-phospho-L-seryl-[protein] + ADP + H(+). It carries out the reaction L-threonyl-[protein] + ATP = O-phospho-L-threonyl-[protein] + ADP + H(+). Its function is as follows. May be involved in plant development processes. This Oryza sativa subsp. japonica (Rice) protein is Serine/threonine-protein kinase Nek6.